Consider the following 465-residue polypeptide: MVQKKPAELQGFHRSFKGQNPFELAFSLDQPDHGDSDFGLQCSARPDMPASQPIDIPDAKKRGKKKKRGRATDSFSGRFEDVYQLQEDVLGEGAHARVQTCINLITSQEYAVKIIEKQPGHIRSRVFREVEMLYQCQGHRNVLELIEFFEEEDRFYLVFEKMRGGSILSHIHKRRHFNELEASVVVQDVASALDFLHNKGIAHRDLKPENILCEHPNQVSPVKICDFDLGSGIKLNGDCSPISTPELLTPCGSAEYMAPEVVEAFSEEASIYDKRCDLWSLGVILYILLSGYPPFVGRCGSDCGWDRGEACPACQNMLFESIQEGKYEFPDKDWAHISCAAKDLISKLLVRDAKQRLSAAQVLQHPWVQGCAPENTLPTPMVLQRNSCAKDLTSFAAEAIAMNRQLAQHDEDLAEEEAAGQGQPVLVRATSRCLQLSPPSQSKLAQRRQRASLSSAPVVLVGDHA.

The segment at 23 to 72 (ELAFSLDQPDHGDSDFGLQCSARPDMPASQPIDIPDAKKRGKKKKRGRAT) is disordered. Residues 60 to 66 (KKRGKKK) carry the Nuclear localization signal motif. Serine 74 bears the Phosphoserine mark. The region spanning 84 to 388 (QLQEDVLGEG…TPMVLQRNSC (305 aa)) is the Protein kinase domain. Residues 90–98 (LGEGAHARV) and lysine 113 contribute to the ATP site. 160 to 162 (EKM) contacts staurosporine. The active-site Proton acceptor is aspartate 205. Staurosporine is bound at residue glutamate 209. Phosphothreonine is present on residues threonine 244 and threonine 249. Residues cysteine 299, cysteine 311, and cysteine 314 each coordinate Zn(2+). Threonine 379 is subject to Phosphothreonine. Residues serine 437 and serine 440 each carry the phosphoserine modification. An MAP kinase binding motif is present at residues 444 to 448 (LAQRR). The residue at position 452 (serine 452) is a Phosphoserine.

This sequence belongs to the protein kinase superfamily. CAMK Ser/Thr protein kinase family. In terms of assembly, monomer. Interacts with the C-terminal regions of EIF4G1 and EIF4G2; this interaction is promoted when MAPK pathways are repressed but repressed upon ERK proteins activation. Also binds to dephosphorylated MAPK3/ERK1 and MAPK1/ERK2. Isoform 1 interaction with phosphorylated MAPK3/ERK1 and MAPK1/ERK2 protects it from dephosphorylation and inactivation. Isoform 2 interacts with ESR2 and EIF4E in the nucleus. It depends on Mg(2+) as a cofactor. Zn(2+) is required as a cofactor. In terms of processing, dual phosphorylation of Thr-244 and Thr-249 activates the kinase. Phosphorylation of Thr-379 activates the kinase. Phosphorylated upon arsenic trioxide As(2)O(3) treatment. Phosphorylated by MAPK1/ERK2, MAPK11 and MAPK14. Dephosphorylated by PP2A. As to expression, ubiquitously expressed in all tissues examined. Isoform 2 is expressed at higher levels in the ovary than is isoform 1.

Its subcellular location is the nucleus. The protein localises to the PML body. It localises to the cytoplasm. It carries out the reaction L-seryl-[protein] + ATP = O-phospho-L-seryl-[protein] + ADP + H(+). It catalyses the reaction L-threonyl-[protein] + ATP = O-phospho-L-threonyl-[protein] + ADP + H(+). With respect to regulation, inhibited by CGP57380 and staurosporine. Activated by phosphorylation in a negative-feedback regulatory manner in response to chemotherapy (e.g. cytarabine) and thus impairs the generation of antileukemic responses. Its function is as follows. Serine/threonine-protein kinase that phosphorylates SFPQ/PSF, HNRNPA1 and EIF4E. May play a role in the response to environmental stress and cytokines. Appears to regulate translation by phosphorylating EIF4E, thus increasing the affinity of this protein for the 7-methylguanosine-containing mRNA cap. Required for mediating PP2A-inhibition-induced EIF4E phosphorylation. Triggers EIF4E shuttling from cytoplasm to nucleus. Isoform 1 displays a high basal kinase activity, but isoform 2 exhibits a very low kinase activity. Acts as a mediator of the suppressive effects of IFNgamma on hematopoiesis. Negative regulator for signals that control generation of arsenic trioxide As(2)O(3)-dependent apoptosis and anti-leukemic responses. Involved in anti-apoptotic signaling in response to serum withdrawal. This Homo sapiens (Human) protein is MAP kinase-interacting serine/threonine-protein kinase 2 (MKNK2).